The primary structure comprises 127 residues: Small ribosomal subunit protein uS12 (127 aa).

Residues methionine 1 to proline 28 form a disordered region. Position 89 is a 3-methylthioaspartic acid (aspartate 89). A disordered region spans residues alanine 104–lysine 127. Over residues asparagine 109–lysine 127 the composition is skewed to basic residues.

This sequence belongs to the universal ribosomal protein uS12 family. As to quaternary structure, part of the 30S ribosomal subunit. Contacts proteins S8 and S17. May interact with IF1 in the 30S initiation complex.

In terms of biological role, with S4 and S5 plays an important role in translational accuracy. Interacts with and stabilizes bases of the 16S rRNA that are involved in tRNA selection in the A site and with the mRNA backbone. Located at the interface of the 30S and 50S subunits, it traverses the body of the 30S subunit contacting proteins on the other side and probably holding the rRNA structure together. The combined cluster of proteins S8, S12 and S17 appears to hold together the shoulder and platform of the 30S subunit. This is Small ribosomal subunit protein uS12 from Microcystis aeruginosa (strain NIES-843 / IAM M-2473).